Consider the following 447-residue polypeptide: MAATPLPPPRRPVFSRGSWAETRRVTEILRKETVGGVILLVAAAAALIWANSPWAEGYFALRDLELGGEWFGLHLNLTLGAWAADGLLAIFFLVVGLELKREFVAGDLRDPSRAALPIAAAVGGMVVPALIFVLVNLNTGDGALRGWAIPTATDIAFAVAVLAVIGTHLPSALRTFLLTLAVVDDLLAITVIAVFYTEDINGLALALAAVPLALFALCVQRGVQKWWVLVPLSVATWVLMHESGVHATVAGVLLGFAVPVRRQATPRGRGPAPSQRVGMAEYFEHRVRPVSAGIAIPVFAFFAAGVSIGGLDGFTRALSDPITLGIVLGLVLGKPIGIVLTTRVLSAVTRANLDASLRWVDVVGMSMLAGIGFTVSLLIGDLAYGLGSERDEFVKIGVLFGSLLAAGVAAVVLLTRNRAYRRIYREETVDEDRDGVPDVYQTRQDRT.

A run of 10 helical transmembrane segments spans residues 34–54 (VGGV…NSPW), 77–97 (LTLG…VVGL), 115–135 (ALPI…FVLV), 146–166 (GWAI…AVIG), 176–196 (FLLT…AVFY), 200–220 (INGL…LCVQ), 290–310 (VSAG…SIGG), 321–341 (PITL…IVLT), 359–379 (WVDV…SLLI), and 393–413 (FVKI…AVVL).

Belongs to the NhaA Na(+)/H(+) (TC 2.A.33) antiporter family.

Its subcellular location is the cell membrane. It catalyses the reaction Na(+)(in) + 2 H(+)(out) = Na(+)(out) + 2 H(+)(in). Na(+)/H(+) antiporter that extrudes sodium in exchange for external protons. The sequence is that of Na(+)/H(+) antiporter NhaA 2 from Mycolicibacterium gilvum (strain PYR-GCK) (Mycobacterium gilvum (strain PYR-GCK)).